Consider the following 211-residue polypeptide: Interleukin-6 (211 aa).

Positions 1-24 (MKFLSARDFQPVAFLGLMLLTATA) are cleaved as a signal peptide. The cysteines at positions 70 and 76 are disulfide-linked. The residue at position 79 (serine 79) is a Phosphoserine. Cysteine 99 and cysteine 109 are oxidised to a cystine.

Belongs to the IL-6 superfamily. As to quaternary structure, component of a hexamer of two molecules each of IL6, IL6R and IL6ST; first binds to IL6R to associate with the signaling subunit IL6ST. Interacts with IL6R (via the N-terminal ectodomain); this interaction may be affected by IL6R-binding with SORL1, hence decreasing IL6 cis signaling. Interacts with SORL1 (via the N-terminal ectodomain); this interaction leads to IL6 internalization and lysosomal degradation. May form a trimeric complex with the soluble SORL1 ectodomain and soluble IL6R receptor; this interaction might stabilize circulating IL6, hence promoting IL6 trans signaling.

The protein resides in the secreted. Cytokine with a wide variety of biological functions in immunity, tissue regeneration, and metabolism. Binds to IL6R, then the complex associates to the signaling subunit IL6ST/gp130 to trigger the intracellular IL6-signaling pathway. The interaction with the membrane-bound IL6R and IL6ST stimulates 'classic signaling', whereas the binding of IL6 and soluble IL6R to IL6ST stimulates 'trans-signaling'. Alternatively, 'cluster signaling' occurs when membrane-bound IL6:IL6R complexes on transmitter cells activate IL6ST receptors on neighboring receiver cells. Functionally, IL6 is a potent inducer of the acute phase response. Rapid production of IL6 contributes to host defense during infection and tissue injury, but excessive IL6 synthesis is involved in disease pathology. In the innate immune response, is synthesized by myeloid cells, such as macrophages and dendritic cells, upon recognition of pathogens through toll-like receptors (TLRs) at the site of infection or tissue injury. In the adaptive immune response, is required for the differentiation of B-cells into immunoglolin-secreting cells. Plays a major role in the differentiation of CD4(+) T cell subsets. Essential factor for the development of T follicular helper (Tfh) cells that are required for the induction of germinal-center formation. Together with IL21, controls the early generation of Tfh cells and are critical for an effective antibody response to acute viral infection. Required to drive naive CD4(+) T cells to the Th17 lineage, through 'cluster signaling' by dendritic cells. Also required for proliferation of myeloma cells and the survival of plasmablast cells. In terms of biological role, acts as an essential factor in bone homeostasis and on vessels directly or indirectly by induction of VEGF, resulting in increased angiogenesis activity and vascular permeability. Induces, through 'trans-signaling' and synergistically with IL1B and TNF, the production of VEGF. Involved in metabolic controls, is discharged into the bloodstream after muscle contraction increasing lipolysis and improving insulin resistance. 'Trans-signaling' in central nervous system regulates energy and glucose homeostasis. Mediates, through GLP-1, crosstalk between insulin-sensitive tissues, intestinal L cells and pancreatic islets to adapt to changes in insulin demand. Also acts as a myokine. Plays a protective role during liver injury, being required for maintenance of tissue regeneration. Also has a pivotal role in iron metabolism by regulating HAMP/hepcidin expression upon inflammation or bacterial infection. Through activation of IL6ST-YAP-NOTCH pathway, induces inflammation-induced epithelial regeneration. The polypeptide is Interleukin-6 (Rattus norvegicus (Rat)).